We begin with the raw amino-acid sequence, 232 residues long: 5'-methylthioadenosine/S-adenosylhomocysteine nucleosidase (232 aa).

Catalysis depends on E12, which acts as the Proton acceptor. Residues G78, I152, and 173–174 (ME) each bind substrate. D197 acts as the Proton donor in catalysis.

This sequence belongs to the PNP/UDP phosphorylase family. MtnN subfamily. In terms of assembly, homodimer.

The enzyme catalyses S-adenosyl-L-homocysteine + H2O = S-(5-deoxy-D-ribos-5-yl)-L-homocysteine + adenine. It carries out the reaction S-methyl-5'-thioadenosine + H2O = 5-(methylsulfanyl)-D-ribose + adenine. It catalyses the reaction 5'-deoxyadenosine + H2O = 5-deoxy-D-ribose + adenine. It functions in the pathway amino-acid biosynthesis; L-methionine biosynthesis via salvage pathway; S-methyl-5-thio-alpha-D-ribose 1-phosphate from S-methyl-5'-thioadenosine (hydrolase route): step 1/2. Catalyzes the irreversible cleavage of the glycosidic bond in both 5'-methylthioadenosine (MTA) and S-adenosylhomocysteine (SAH/AdoHcy) to adenine and the corresponding thioribose, 5'-methylthioribose and S-ribosylhomocysteine, respectively. Also cleaves 5'-deoxyadenosine, a toxic by-product of radical S-adenosylmethionine (SAM) enzymes, into 5-deoxyribose and adenine. Thus, is required for in vivo function of the radical SAM enzymes biotin synthase and lipoic acid synthase, that are inhibited by 5'-deoxyadenosine accumulation. The chain is 5'-methylthioadenosine/S-adenosylhomocysteine nucleosidase from Citrobacter koseri (strain ATCC BAA-895 / CDC 4225-83 / SGSC4696).